A 436-amino-acid chain; its full sequence is Probable 4-aminobutyrate aminotransferase (436 aa).

An N6-(pyridoxal phosphate)lysine modification is found at Lys-281.

It belongs to the class-III pyridoxal-phosphate-dependent aminotransferase family. Requires pyridoxal 5'-phosphate as cofactor.

It carries out the reaction 4-aminobutanoate + 2-oxoglutarate = succinate semialdehyde + L-glutamate. The enzyme catalyses (S)-3-amino-2-methylpropanoate + 2-oxoglutarate = 2-methyl-3-oxopropanoate + L-glutamate. Its pathway is amino-acid degradation; 4-aminobutanoate degradation. The chain is Probable 4-aminobutyrate aminotransferase (gabT) from Bacillus subtilis (strain 168).